Reading from the N-terminus, the 426-residue chain is Isovaleryl-CoA dehydrogenase, mitochondrial (426 aa).

Residues 1-32 constitute a mitochondrion transit peptide; that stretch reads MATAAWLLGRRVASWRMRPPLQSLAGLITQRT. N6-acetyllysine; alternate is present on residues K58 and K78. 2 positions are modified to N6-succinyllysine; alternate: K58 and K78. FAD-binding positions include 165–174 and 198–200; these read LAMSEPNAGS and WIT. Residue S174 participates in substrate binding. 222-223 contributes to the substrate binding site; the sequence is SR. An N6-acetyllysine modification is found at K241. Substrate-binding positions include Y277 and 284–287; that span reads DLER. E286 functions as the Proton acceptor in the catalytic mechanism. Position 312 (R312) interacts with FAD. K318 carries the post-translational modification N6-succinyllysine. FAD contacts are provided by residues Q323 and 380 to 384; that span reads QCLGG. Residue 407–408 coordinates substrate; the sequence is AG. 409 to 411 serves as a coordination point for FAD; the sequence is TSE.

This sequence belongs to the acyl-CoA dehydrogenase family. As to quaternary structure, homotetramer. Requires FAD as cofactor.

It is found in the mitochondrion matrix. It carries out the reaction 3-methylbutanoyl-CoA + oxidized [electron-transfer flavoprotein] + H(+) = 3-methylbut-2-enoyl-CoA + reduced [electron-transfer flavoprotein]. The catalysed reaction is pentanoyl-CoA + oxidized [electron-transfer flavoprotein] + H(+) = (2E)-pentenoyl-CoA + reduced [electron-transfer flavoprotein]. The enzyme catalyses hexanoyl-CoA + oxidized [electron-transfer flavoprotein] + H(+) = (2E)-hexenoyl-CoA + reduced [electron-transfer flavoprotein]. It catalyses the reaction butanoyl-CoA + oxidized [electron-transfer flavoprotein] + H(+) = (2E)-butenoyl-CoA + reduced [electron-transfer flavoprotein]. It functions in the pathway amino-acid degradation; L-leucine degradation; (S)-3-hydroxy-3-methylglutaryl-CoA from 3-isovaleryl-CoA: step 1/3. Catalyzes the conversion of isovaleryl-CoA/3-methylbutanoyl-CoA to 3-methylbut-2-enoyl-CoA as an intermediate step in the leucine (Leu) catabolic pathway. To a lesser extent, is also able to catalyze the oxidation of other saturated short-chain acyl-CoA thioesters as pentanoyl-CoA, hexenoyl-CoA and butenoyl-CoA. The polypeptide is Isovaleryl-CoA dehydrogenase, mitochondrial (IVD) (Bos taurus (Bovine)).